We begin with the raw amino-acid sequence, 186 residues long: Heat shock protein 23 (186 aa).

One can recognise a sHSP domain in the interval 53–161; that stretch reads VGASSGSSGA…KGNERIVQIQ (109 aa). The segment at 163–186 is disordered; that stretch reads VGPAHLNVKENPKEAVEQDNGNDK. The span at 169 to 186 shows a compositional bias: basic and acidic residues; it reads NVKENPKEAVEQDNGNDK.

Belongs to the small heat shock protein (HSP20) family.

This Drosophila melanogaster (Fruit fly) protein is Heat shock protein 23 (Hsp23).